The sequence spans 661 residues: UvrABC system protein B (661 aa).

The region spanning 25–178 (EGILKGEKFQ…DEVIRELIRM (154 aa)) is the Helicase ATP-binding domain. 38 to 45 (GVTGSGKT) contacts ATP. Positions 91-114 (YYDYYQPEAYIPETDTYIEKDSSI) match the Beta-hairpin motif. The Helicase C-terminal domain occupies 429 to 591 (QIDHLIGEIR…IVPQTVRKGI (163 aa)). One can recognise a UVR domain in the interval 625 to 660 (EEYIKELEQQMKRFAIELEFEKAAKIRDKIFELKKL).

This sequence belongs to the UvrB family. As to quaternary structure, forms a heterotetramer with UvrA during the search for lesions. Interacts with UvrC in an incision complex.

Its subcellular location is the cytoplasm. Its function is as follows. The UvrABC repair system catalyzes the recognition and processing of DNA lesions. A damage recognition complex composed of 2 UvrA and 2 UvrB subunits scans DNA for abnormalities. Upon binding of the UvrA(2)B(2) complex to a putative damaged site, the DNA wraps around one UvrB monomer. DNA wrap is dependent on ATP binding by UvrB and probably causes local melting of the DNA helix, facilitating insertion of UvrB beta-hairpin between the DNA strands. Then UvrB probes one DNA strand for the presence of a lesion. If a lesion is found the UvrA subunits dissociate and the UvrB-DNA preincision complex is formed. This complex is subsequently bound by UvrC and the second UvrB is released. If no lesion is found, the DNA wraps around the other UvrB subunit that will check the other stand for damage. The sequence is that of UvrABC system protein B from Caldicellulosiruptor saccharolyticus (strain ATCC 43494 / DSM 8903 / Tp8T 6331).